Consider the following 119-residue polypeptide: Protein TusC (119 aa).

Belongs to the DsrF/TusC family. In terms of assembly, heterohexamer, formed by a dimer of trimers. The hexameric TusBCD complex contains 2 copies each of TusB, TusC and TusD. The TusBCD complex interacts with TusE.

Its subcellular location is the cytoplasm. Functionally, part of a sulfur-relay system required for 2-thiolation of 5-methylaminomethyl-2-thiouridine (mnm(5)s(2)U) at tRNA wobble positions. This chain is Protein TusC, found in Serratia proteamaculans (strain 568).